The chain runs to 35 residues: Dolichyl-diphosphooligosaccharide--protein glycosyltransferase subunit 4C (35 aa).

Residues 1–8 lie on the Lumenal side of the membrane; the sequence is MFDDQDLG. A helical membrane pass occupies residues 9–29; it reads FFANFLGIFIFILVIAYHFVM. Residues 30-35 are Cytoplasmic-facing; that stretch reads ADPKFE.

This sequence belongs to the OST4 family. As to quaternary structure, component of the oligosaccharyltransferase (OST) complex.

The protein localises to the endoplasmic reticulum membrane. In terms of biological role, subunit of the oligosaccharyl transferase (OST) complex that catalyzes the initial transfer of a defined glycan (Glc(3)Man(9)GlcNAc(2) in eukaryotes) from the lipid carrier dolichol-pyrophosphate to an asparagine residue within an Asn-X-Ser/Thr consensus motif in nascent polypeptide chains, the first step in protein N-glycosylation. N-glycosylation occurs cotranslationally and the complex associates with the Sec61 complex at the channel-forming translocon complex that mediates protein translocation across the endoplasmic reticulum (ER). All subunits are required for a maximal enzyme activity. This is Dolichyl-diphosphooligosaccharide--protein glycosyltransferase subunit 4C (OST4C) from Arabidopsis thaliana (Mouse-ear cress).